Reading from the N-terminus, the 415-residue chain is Tyrosine--tRNA ligase (415 aa).

Residues 54 to 63 carry the 'HIGH' region motif; that stretch reads PTGSNIHLGH. The 'KMSKS' region signature appears at 248–252; sequence KMSKS. Lys251 is a binding site for ATP. The S4 RNA-binding domain occupies 351-415; the sequence is AKAFYLLSAV…GKKTFRRLTA (65 aa).

It belongs to the class-I aminoacyl-tRNA synthetase family. TyrS type 2 subfamily. Homodimer.

Its subcellular location is the cytoplasm. It carries out the reaction tRNA(Tyr) + L-tyrosine + ATP = L-tyrosyl-tRNA(Tyr) + AMP + diphosphate + H(+). Its function is as follows. Catalyzes the attachment of tyrosine to tRNA(Tyr) in a two-step reaction: tyrosine is first activated by ATP to form Tyr-AMP and then transferred to the acceptor end of tRNA(Tyr). This chain is Tyrosine--tRNA ligase, found in Parasynechococcus marenigrum (strain WH8102).